The primary structure comprises 313 residues: Ribosomal RNA small subunit methyltransferase H (313 aa).

S-adenosyl-L-methionine-binding positions include 35–37 (GGH), aspartate 55, phenylalanine 79, aspartate 101, and glutamine 108. Residues 276 to 300 (QGGPTLKSVGKMMPPDDEVADNPRA) form a disordered region.

It belongs to the methyltransferase superfamily. RsmH family.

Its subcellular location is the cytoplasm. The enzyme catalyses cytidine(1402) in 16S rRNA + S-adenosyl-L-methionine = N(4)-methylcytidine(1402) in 16S rRNA + S-adenosyl-L-homocysteine + H(+). In terms of biological role, specifically methylates the N4 position of cytidine in position 1402 (C1402) of 16S rRNA. This Dickeya chrysanthemi (strain Ech1591) (Dickeya zeae (strain Ech1591)) protein is Ribosomal RNA small subunit methyltransferase H.